We begin with the raw amino-acid sequence, 546 residues long: MKILFATLLVVTTPHLVTGQIHWGNLSKIGVVGTGSASYKVMTQSSHQTLVIKLMPNITAIDNCTKTEIEEYKRLLGTVLQPIKVALNAITKNIKPIKSSTTSRRHRRFAGVALAGAALGVATAAQITAGIALHQSMMNTQAIESLKASLETTNQAIEEIRQAGQEMILAVQGVQDYINNELVPAMGQLSCDIVGQKLGLKLLRYYTEILSLFGPSLRDPISAEISIQALSYALGGDINKILEKLGYSGSDLLAILESKGIKAKITYVDIESYFIVLSIAYPSLSEIKGVIIHRLEGVSYNIGSQEWYTTVPRYVATQGYLISNFDDTPCAFSPEGTICSQNALYPMSPLLQECFRGSTRSCARTLVSGSIGNRFILSKGNLIANCASILCKCYTTGSIISQDPDKILTYIAADQCPIVEVDGVTIQVGSREYPDAVYLHKIDLGPPISLEKLDVGTNLGNAVTKLEKAKDLLDSSDLILETIKGASVTNTGHILVGAGLIAVVGILIVTCCCRKRSNDSKVSTVILNPGLKPDLTGTSKSYVRSL.

Residues 1-19 (MKILFATLLVVTTPHLVTG) form the signal peptide. The Extracellular portion of the chain corresponds to 20-491 (QIHWGNLSKI…TIKGASVTNT (472 aa)). 3 N-linked (GlcNAc...) asparagine; by host glycosylation sites follow: N25, N57, and N63. The interval 109–133 (FAGVALAGAALGVATAAQITAGIAL) is fusion peptide. A coiled-coil region spans residues 134–162 (HQSMMNTQAIESLKASLETTNQAIEEIRQ). 4 cysteine pairs are disulfide-bonded: C330/C339, C354/C362, C386/C391, and C393/C416. The stretch at 458–483 (NLGNAVTKLEKAKDLLDSSDLILETI) forms a coiled coil. Residues 492 to 512 (GHILVGAGLIAVVGILIVTCC) form a helical membrane-spanning segment. The Cytoplasmic portion of the chain corresponds to 513–546 (CRKRSNDSKVSTVILNPGLKPDLTGTSKSYVRSL).

It belongs to the paramyxoviruses fusion glycoprotein family. As to quaternary structure, homotrimer of disulfide-linked F1-F2. The inactive precursor F0 is glycosylated and proteolytically cleaved into F1 and F2 to be functionally active. The cleavage is mediated by cellular proteases during the transport and maturation of the polypeptide.

The protein resides in the virion membrane. It is found in the host cell membrane. Functionally, class I viral fusion protein. Under the current model, the protein has at least 3 conformational states: pre-fusion native state, pre-hairpin intermediate state, and post-fusion hairpin state. During viral and plasma cell membrane fusion, the heptad repeat (HR) regions assume a trimer-of-hairpins structure, positioning the fusion peptide in close proximity to the C-terminal region of the ectodomain. The formation of this structure appears to drive apposition and subsequent fusion of viral and plasma cell membranes. Directs fusion of viral and cellular membranes leading to delivery of the nucleocapsid into the cytoplasm. This fusion is pH independent and occurs directly at the outer cell membrane. The trimer of F1-F2 (F protein) probably interacts with HN at the virion surface. Upon HN binding to its cellular receptor, the hydrophobic fusion peptide is unmasked and interacts with the cellular membrane, inducing the fusion between cell and virion membranes. Later in infection, F proteins expressed at the plasma membrane of infected cells could mediate fusion with adjacent cells to form syncytia, a cytopathic effect that could lead to tissue necrosis. The polypeptide is Fusion glycoprotein F0 (F) (Rinderpest virus (strain RBOK) (RDV)).